Here is a 319-residue protein sequence, read N- to C-terminus: ATP-dependent 6-phosphofructokinase (319 aa).

G11 lines the ATP pocket. 21–25 (RAVVR) contacts ADP. ATP-binding positions include 72 to 73 (RC) and 102 to 105 (GDGS). D103 is a binding site for Mg(2+). 125–127 (TID) lines the substrate pocket. Catalysis depends on D127, which acts as the Proton acceptor. R154 contributes to the ADP binding site. Substrate contacts are provided by residues R162 and 169–171 (MGR). Residues 185-187 (GAE), R211, and 213-215 (KKH) contribute to the ADP site. Substrate contacts are provided by residues E222, R243, and 249–252 (HIQR).

Belongs to the phosphofructokinase type A (PFKA) family. ATP-dependent PFK group I subfamily. Prokaryotic clade 'B1' sub-subfamily. In terms of assembly, homotetramer. Component of a possible RNA degradosome complex composed of rny, rnjA, rnjB, pnp, pfkA and eno (although rnjA and rnjB's presence is unclear). Specifically interacts with RNase Y (rny, PubMed:21803996) and enolase (eno, PubMed:22198292). Interacts with BrxC. It depends on Mg(2+) as a cofactor.

The protein localises to the cytoplasm. It carries out the reaction beta-D-fructose 6-phosphate + ATP = beta-D-fructose 1,6-bisphosphate + ADP + H(+). The protein operates within carbohydrate degradation; glycolysis; D-glyceraldehyde 3-phosphate and glycerone phosphate from D-glucose: step 3/4. Its activity is regulated as follows. Allosterically activated by ADP and other diphosphonucleosides, and allosterically inhibited by phosphoenolpyruvate. Its function is as follows. Catalyzes the phosphorylation of D-fructose 6-phosphate to fructose 1,6-bisphosphate by ATP, the first committing step of glycolysis. This is ATP-dependent 6-phosphofructokinase from Bacillus subtilis (strain 168).